The sequence spans 728 residues: MARELAAVYAQVFDLAAEVSLLGYCDPSSIDKRCVMANSNKVFKLCESLLPCLRLQNDTECSPLSLELQHLLQNTREALGVLTDLLSGDPSRSEYFEALHPSRPLEGPCKRHARVRVPFYGGAEKTVSLSLLNDVEVFFKRLNSVFYCLPAEGALEALGETVAFLGRLRGVSPIPPADAYVSSVPCASCFAEAAMLPNQGESVLSMLAAVNCNHVCRQVPSDPVIGVFENELRHLGADARAAGRAGGGRESERRGREDADDEEDDEEEPRDGQGDAGDGAALRVLTESSLSVLAGHTIFEEEDGRLAEISNLVYWSSAADRGGVGGTARATSSSHMAKLFAHEARMHRSRAWLGRGAPSHFFDAHRPSPLESLFCGGVFNSIDDTIAALQKDCSATFLKKSNYQTLIQQQNELYVRLNEVLNGAGRDEGGAKGAEAIADAEPLKPDGGASCDPRDVLSDARVRRDLYLKKLTRDGLRRLTDCIETHGRVLSDTLSLRVWGSALYASAARLVNHFLFRRQFVGLGWADLTAGGEAAFENSKYIKNALHGQRLNREHLDSIVVHFYRLITGPLSLQNSHFPVPDNVALAYCLDAAGAMPHQKLVITEMIWPGIESKDWIDCNFNSFYSIETGDLNLTQKKTLNYIREAVLSISLYNRVWEKSLSLLSATELRGSCLAESASGELGEGVYLTYEGTAPLVLVFDSKGYVFKDLYTLLYTHLQLSGRRQASV.

A C3H1-type zinc finger spans residues 186–214 (CASCFAEAAMLPNQGESVLSMLAAVNCNH). The disordered stretch occupies residues 239–278 (ARAAGRAGGGRESERRGREDADDEEDDEEEPRDGQGDAGD). Residues 247 to 257 (GGRESERRGRE) are compositionally biased toward basic and acidic residues. The segment covering 258-269 (DADDEEDDEEEP) has biased composition (acidic residues). 653–660 (YNRVWEKS) contributes to the ATP binding site.

The protein belongs to the herpesviridae TRM1 protein family. As to quaternary structure, associates with TRM2 and TRM3 to form the tripartite terminase complex. Interacts with portal protein.

It localises to the host nucleus. Functionally, component of the molecular motor that translocates viral genomic DNA in empty capsid during DNA packaging. Forms a tripartite terminase complex together with TRM2 and TRM3 in the host cytoplasm. Once the complex reaches the host nucleus, it interacts with the capsid portal vertex. This portal forms a ring in which genomic DNA is translocated into the capsid. TRM1 carries an endonuclease activity that plays an important role for the cleavage of concatemeric viral DNA into unit length genomes. The chain is Tripartite terminase subunit 1 from Equine herpesvirus 2 (strain 86/87) (EHV-2).